A 450-amino-acid chain; its full sequence is Cysteine proteinase (450 aa).

An N-terminal signal peptide occupies residues M1–A20. A propeptide spans A21–R125 (activation peptide). N120 carries N-linked (GlcNAc...) asparagine glycosylation. An intrachain disulfide couples C147 to C188. Residues C150, H287, and N307 contribute to the active site. Positions T343–Q450 are 108-residue extension. Residue N397 is glycosylated (N-linked (GlcNAc...) asparagine).

It belongs to the peptidase C1 family.

The protein localises to the lysosome. The cysteine proteinases have a potential role in host-parasite interaction and virulence. In Trypanosoma brucei brucei, this protein is Cysteine proteinase.